A 78-amino-acid polypeptide reads, in one-letter code: U-scoloptoxin(15)-Ssm2a (78 aa).

Residues 1–23 (MEKKIIFLCFFVSLLTLPEFISS) form the signal peptide. The tract at residues 34-37 (PEKK) is important for inhibition of KCNQ4. 2 cysteine pairs are disulfide-bonded: C44–C70 and C48–C72.

The protein belongs to the SLPTX(15) family. Expressed by the venom gland.

The protein localises to the secreted. This is U-scoloptoxin(15)-Ssm2a from Scolopendra mutilans (Chinese red-headed centipede).